A 244-amino-acid chain; its full sequence is uncharacterized protein (244 aa).

Basic and acidic residues-rich tracts occupy residues 1–10 (MNDPFARMET) and 100–127 (GTRG…HGEE). Disordered stretches follow at residues 1–79 (MNDP…GEEL), 100–130 (GTRG…EPNY), and 219–244 (TGAS…EIKL).

This is an uncharacterized protein from Homo sapiens (Human).